Consider the following 530-residue polypeptide: Putative sulfate transporter YvdB (530 aa).

Transmembrane regions (helical) follow at residues 19–39, 41–61, 68–88, 91–111, 121–141, 164–184, 192–212, 241–261, 313–333, and 384–404; these read LIAGIVVGVVAIPLGMAFAIA, GVEPEYGLYTVVIAGICISLF, IGGPTGAFVPILFGIIMQYGL, LLIAGFMAGVMLVLFGLFKLG, VIVGFTAGIAVLIFTEQIANF, LGTFNVYAILTAVIGLVILLV, VPGALLALLISTVVAVVFFPD, MVMLFPAALVIALLGGLESIL, AVSPVSGVVHGVVVLLVLLVF, and VLFDLIIGVATGLLLAFVFFI. An STAS domain is found at 420–530; that stretch reads PVLAKREDPS…FFDHHDEITG (111 aa).

Belongs to the SLC26A/SulP transporter (TC 2.A.53) family.

Its subcellular location is the cell membrane. This is Putative sulfate transporter YvdB (yvdB) from Bacillus subtilis (strain 168).